The chain runs to 376 residues: c-di-GMP synthase (376 aa).

The protein belongs to the CD-NTase family. G05 subfamily.

The enzyme catalyses 2 GTP = 3',3'-c-di-GMP + 2 diphosphate. Its function is as follows. Cyclic nucleotide synthase (second messenger synthase) of a CBASS antivirus system. CBASS (cyclic oligonucleotide-based antiphage signaling system) provides immunity against bacteriophage. The CD-NTase protein synthesizes cyclic nucleotides in response to infection; these serve as specific second messenger signals. The signals activate a diverse range of effectors, leading to bacterial cell death and thus abortive phage infection. A type I-D CBASS(GG) system. Functionally, cyclic dinucleotide synthase that catalyzes the synthesis of c-di-GMP, has no activity with other NTP substrates. In Roseivirga ehrenbergii (strain DSM 102268 / JCM 13514 / KCTC 12282 / NCIMB 14502 / KMM 6017), this protein is c-di-GMP synthase.